A 444-amino-acid chain; its full sequence is MRKVKPKLNLTSQTARIVNLSHDGRGIARVNGKATFIQGALPGEVVEFQYTRIKKDFDEGKLLSIVEPSTLRVEPKCPHYQMCGGCSLQHMSAEEQIRFKQSHLLDLLSRYGHTEPQSVLSPLTSHHWNYRNKARLSTRFVEKKQSTMVGFRERNNPRFITEINQCPILNSKIDTDIVHLRKLIDTMEDKHCIAQIEVAAGDNEVALIFRNLSPLTEQDELKIREFAQQFQYKVFLQPGGLDSVFCFYPSDAHAYLSYELPDYQITFQFHPNDFTQVNAELNRKMVTQAIQLMELKNSDIVLDLFCGLGNFSLPMAKHCSRVIGVEGNKNMVERAYMNAKSNHITNVDFYAANLDDVMEVRNLVNTSFSKVLIDPPRSGALEIVKQIDSIDPERIVYVSCNPITLARDTDILVNQKGYVLITAGVMDMFPHTAHVESIALFQKG.

A TRAM domain is found at 5–64 (KPKLNLTSQTARIVNLSHDGRGIARVNGKATFIQGALPGEVVEFQYTRIKKDFDEGKLLS). C77, C83, C86, and C166 together coordinate [4Fe-4S] cluster. S-adenosyl-L-methionine is bound by residues Q276, F305, N310, E326, N353, and D374. C400 (nucleophile) is an active-site residue.

The protein belongs to the class I-like SAM-binding methyltransferase superfamily. RNA M5U methyltransferase family. RlmD subfamily.

It carries out the reaction uridine(1939) in 23S rRNA + S-adenosyl-L-methionine = 5-methyluridine(1939) in 23S rRNA + S-adenosyl-L-homocysteine + H(+). Catalyzes the formation of 5-methyl-uridine at position 1939 (m5U1939) in 23S rRNA. This Legionella pneumophila (strain Corby) protein is 23S rRNA (uracil(1939)-C(5))-methyltransferase RlmD.